Consider the following 269-residue polypeptide: Regulatory protein RecX (269 aa).

This sequence belongs to the RecX family.

It localises to the cytoplasm. Its function is as follows. Modulates RecA activity. This is Regulatory protein RecX from Listeria monocytogenes serotype 4b (strain F2365).